Reading from the N-terminus, the 634-residue chain is DNA-directed RNA polymerase subunit gamma (634 aa).

Positions 74, 76, 89, and 92 each coordinate Zn(2+). The Mg(2+) site is built by Asp-471, Asp-473, and Asp-475.

Belongs to the RNA polymerase beta' chain family. RpoC1 subfamily. In terms of assembly, in cyanobacteria the RNAP catalytic core is composed of 2 alpha, 1 beta, 1 beta', 1 gamma and 1 omega subunit. When a sigma factor is associated with the core the holoenzyme is formed, which can initiate transcription. Mg(2+) is required as a cofactor. Zn(2+) serves as cofactor.

The enzyme catalyses RNA(n) + a ribonucleoside 5'-triphosphate = RNA(n+1) + diphosphate. In terms of biological role, DNA-dependent RNA polymerase catalyzes the transcription of DNA into RNA using the four ribonucleoside triphosphates as substrates. The protein is DNA-directed RNA polymerase subunit gamma of Prochlorococcus marinus (strain MIT 9303).